The sequence spans 1654 residues: Microtubule cross-linking factor 2 (1654 aa).

The disordered stretch occupies residues 1 to 188 (METPAGESSA…VAASSVGSSR (188 aa)). Low complexity predominate over residues 55-66 (GSATACGTASSA). Residues 102–113 (GTGPRPPPPPPS) show a composition bias toward pro residues. The span at 132–147 (LGLELALSSDAESAAG) shows a compositional bias: low complexity. The interval 209–238 (PGGLVRELEELRSENDYLKDEIEELRAEML) is required for association with Golgi apparatus membrane. Coiled coils occupy residues 216-279 (LEEL…AERR), 308-349 (SMRL…LQTE), 448-546 (LKLV…YRSE), 816-843 (IKDL…ERQL), and 1079-1113 (SQEK…LQKA). Residues 348-379 (TELDRPREHSLKKRGTRSLGKTDKKPTAQEDS) form a disordered region. Basic and acidic residues predominate over residues 1122-1145 (SDMEKQDNSWKEARSEKTHDKEGV). A disordered region spans residues 1122–1146 (SDMEKQDNSWKEARSEKTHDKEGVS). 2 positions are modified to phosphoserine: serine 1165 and serine 1251. Residues 1406–1505 (LVSVRSKQIS…HSGSTESVWK (100 aa)) are KR-rich domain required for microtubules binding. 3 disordered regions span residues 1427 to 1450 (RPCC…LDST), 1537 to 1560 (PTTA…YHQP), and 1627 to 1654 (NTIR…AAPQ). Over residues 1628 to 1638 (TIRHSPSKCRL) the composition is skewed to basic residues.

This sequence belongs to the MTCL family. In terms of assembly, interacts with CLASP2. Interacts with CLASP1. The C-terminal SOGA 25 kDa form occurs as a monomer. In terms of processing, proteolytically cleaved into a C-terminal SOGA 25 kDa form that is detected in plasma. Proteolytically cleaved in primary hepatocytes into a C-terminal SOGA 80 kDa form. Post-translationally, phosphorylated during mitosis in a CDK1-dependent manner. Expressed in liver (at protein level).

The protein localises to the secreted. The protein resides in the cytoplasm. Its subcellular location is the cytoskeleton. It is found in the golgi apparatus membrane. It localises to the midbody. Functionally, microtubule-associated factor that enables integration of the centrosomal and Golgi-associated microtubules on the Golgi membrane, supporting directional migration. Preferentially acts on the perinuclear microtubules accumulated around the Golgi. Associates with the Golgi membrane through the N-terminal coiled-coil region and directly binds microtubules through the C-terminal domain. Required for faithful chromosome segregation during mitosis. Regulates autophagy by playing a role in the reduction of glucose production in an adiponectin- and insulin-dependent manner. This Mus musculus (Mouse) protein is Microtubule cross-linking factor 2 (Mtcl2).